We begin with the raw amino-acid sequence, 73 residues long: uncharacterized protein (73 aa).

A signal peptide spans 1-28 (MKFLLSVIAGLLILALYLFWKVQPPVWI).

This is an uncharacterized protein from Bacillus subtilis (strain 168).